The primary structure comprises 198 residues: A-type ATP synthase subunit E (198 aa).

The protein belongs to the V-ATPase E subunit family. Has multiple subunits with at least A(3), B(3), C, D, E, F, H, I and proteolipid K(x).

It localises to the cell membrane. Its function is as follows. Component of the A-type ATP synthase that produces ATP from ADP in the presence of a proton gradient across the membrane. In Pyrococcus horikoshii (strain ATCC 700860 / DSM 12428 / JCM 9974 / NBRC 100139 / OT-3), this protein is A-type ATP synthase subunit E.